Reading from the N-terminus, the 407-residue chain is NADH dehydrogenase [ubiquinone] 1 alpha subcomplex subunit 10, mitochondrial (407 aa).

The N-terminal 60 residues, 1–60 (MTAVFRVGLVRLVSRATQSPNLLQAQTNALPAAFQQRCSISGKTMRGGPRVPKAAPYPYK), are a transit peptide targeting the mitochondrion.

It belongs to the complex I NDUFA10 subunit family. In terms of assembly, complex I is composed of 45 different subunits. This a component of the hydrophobic protein fraction. Forms a complex including sicily, ND-42 and Hsp83; the complex is necessary to chaperone ND-42 in the cytoplasm before mitochondrial import; the interaction between sicily and ND-42 is direct and occurs preferably between the unprocessed forms in the cytoplasm. It depends on FAD as a cofactor. In terms of tissue distribution, expressed in muscles (at protein level).

It localises to the mitochondrion matrix. Its subcellular location is the cytoplasm. Functionally, accessory subunit of the mitochondrial membrane respiratory chain NADH dehydrogenase (Complex I), that is believed not to be involved in catalysis. Complex I functions in the transfer of electrons from NADH to the respiratory chain. The immediate electron acceptor for the enzyme is believed to be ubiquinone. This chain is NADH dehydrogenase [ubiquinone] 1 alpha subcomplex subunit 10, mitochondrial, found in Drosophila melanogaster (Fruit fly).